The sequence spans 161 residues: MSIEIRKLSIEDLETLIEVARESWKWTYAGIYSEEYIESWIREKYSKEKLLNEIVRSQSNLDILFLGAFADSTLIGFIELKIIANKAELLRLYLKPEYTHKKIGKTLLLEAEKIMKKKGILECRLYVHRQNSVGFSFYYKNGFKVEDTDGSDFIMEKKYES.

In terms of domain architecture, N-acetyltransferase spans Ile-3–Glu-160. Residues Leu-92–Leu-94, Thr-99–Gly-104, Asn-131, and Ser-136 each bind acetyl-CoA. Tyr-138 (proton donor) is an active-site residue. Lys-140 contributes to the acetyl-CoA binding site.

This sequence belongs to the acetyltransferase family. In terms of assembly, monomer or homodimer.

It catalyses the reaction an alkane-alpha,omega-diamine + acetyl-CoA = an N-acetylalkane-alpha,omega-diamine + CoA + H(+). Functionally, involved in the protection against polyamine toxicity by regulating their concentration. Could also be involved in the negative control of sporulation as well as production of degradative enzymes such as alpha-amylase, levansucrase and alkaline phosphatase. Catalyzes the transfer of an acetyl group from acetyl coenzyme A (AcCoA) to an acceptor substrate and release both CoA and the acetylated product. It can use a variety of substrates including spermidine, L-tryptophan, L-leucine, L-lysine, dopamine and tyramine. The chain is Spermidine N(1)-acetyltransferase from Thermoplasma acidophilum (strain ATCC 25905 / DSM 1728 / JCM 9062 / NBRC 15155 / AMRC-C165).